The following is a 57-amino-acid chain: UPF0391 membrane protein Atu4467 (57 aa).

Transmembrane regions (helical) follow at residues Trp-4 to Ser-24 and Ile-33 to Gly-53.

This sequence belongs to the UPF0391 family.

Its subcellular location is the cell membrane. This Agrobacterium fabrum (strain C58 / ATCC 33970) (Agrobacterium tumefaciens (strain C58)) protein is UPF0391 membrane protein Atu4467.